Consider the following 258-residue polypeptide: Exosome complex component Rrp41 (258 aa).

Belongs to the RNase PH family. Rrp41 subfamily. Component of the archaeal exosome complex. Forms a hexameric ring-like arrangement composed of 3 Rrp41-Rrp42 heterodimers. The hexameric ring associates with a trimer of Rrp4 and/or Csl4 subunits.

The protein localises to the cytoplasm. In terms of biological role, catalytic component of the exosome, which is a complex involved in RNA degradation. Has 3'-&gt;5' exoribonuclease activity. Can also synthesize heteromeric RNA-tails. This Archaeoglobus fulgidus (strain ATCC 49558 / DSM 4304 / JCM 9628 / NBRC 100126 / VC-16) protein is Exosome complex component Rrp41.